A 1202-amino-acid polypeptide reads, in one-letter code: DNA-directed RNA polymerase subunit beta (1202 aa).

It belongs to the RNA polymerase beta chain family. As to quaternary structure, the RNAP catalytic core consists of 2 alpha, 1 beta, 1 beta' and 1 omega subunit. When a sigma factor is associated with the core the holoenzyme is formed, which can initiate transcription.

It carries out the reaction RNA(n) + a ribonucleoside 5'-triphosphate = RNA(n+1) + diphosphate. In terms of biological role, DNA-dependent RNA polymerase catalyzes the transcription of DNA into RNA using the four ribonucleoside triphosphates as substrates. The chain is DNA-directed RNA polymerase subunit beta from Leuconostoc mesenteroides subsp. mesenteroides (strain ATCC 8293 / DSM 20343 / BCRC 11652 / CCM 1803 / JCM 6124 / NCDO 523 / NBRC 100496 / NCIMB 8023 / NCTC 12954 / NRRL B-1118 / 37Y).